We begin with the raw amino-acid sequence, 261 residues long: 14-3-3-like protein A (261 aa).

It belongs to the 14-3-3 family.

The protein is 14-3-3-like protein A of Vicia faba (Broad bean).